A 142-amino-acid chain; its full sequence is Large ribosomal subunit protein uL11 (142 aa).

It belongs to the universal ribosomal protein uL11 family. As to quaternary structure, part of the ribosomal stalk of the 50S ribosomal subunit. Interacts with L10 and the large rRNA to form the base of the stalk. L10 forms an elongated spine to which L12 dimers bind in a sequential fashion forming a multimeric L10(L12)X complex. Post-translationally, one or more lysine residues are methylated.

Forms part of the ribosomal stalk which helps the ribosome interact with GTP-bound translation factors. The protein is Large ribosomal subunit protein uL11 of Erwinia tasmaniensis (strain DSM 17950 / CFBP 7177 / CIP 109463 / NCPPB 4357 / Et1/99).